The sequence spans 696 residues: Elongation factor G (696 aa).

Residues 8–288 form the tr-type G domain; sequence EDYRNFGIMA…AVVDFLPSPI (281 aa). Residues 17–24, 86–90, and 140–143 each bind GTP; these read AHIDAGKT, DTPGH, and NKMD.

The protein belongs to the TRAFAC class translation factor GTPase superfamily. Classic translation factor GTPase family. EF-G/EF-2 subfamily.

It is found in the cytoplasm. Catalyzes the GTP-dependent ribosomal translocation step during translation elongation. During this step, the ribosome changes from the pre-translocational (PRE) to the post-translocational (POST) state as the newly formed A-site-bound peptidyl-tRNA and P-site-bound deacylated tRNA move to the P and E sites, respectively. Catalyzes the coordinated movement of the two tRNA molecules, the mRNA and conformational changes in the ribosome. In Chelativorans sp. (strain BNC1), this protein is Elongation factor G.